The sequence spans 203 residues: Gramillins biosynthetic cluster protein FGSG_00038 (203 aa).

Its pathway is mycotoxin biosynthesis. Its function is as follows. Part of the gene cluster that mediates the biosynthesis of gramillins A and B, bicyclic lipopeptides that induce cell death in maize leaves but not in wheat leaves. The nonribosomal peptide synthetase GRA1 incorporates respectively a glutamic adic (Glu), a leucine (Leu), a serine (Ser), a hydroxyglutamine (HOGln), a 2-amino decanoic acid, and 2 cysteins (CysB and CysA). The biosynthesis of 2-amino decanoic acid incorporated in gramillins could be initiated by a fatty acid synthase composed of the alpha and beta subunits FGSG_00036 and FGSG_11656. The cytochrome P450 monooxygenase FGSG_15680 could hydroxylate the fatty acid chain. Subsequent oxidation to the ketone by the oxidoreductase FGSG_00048 and transamination by aminotransferase FGSG_00049 could form 2-amino-decanoic acid. On the other hand, FGSG_15680 could also be responsible for the HO-modified glutamine at the gamma-position. Whether hydroxylation occurs on the fully assembled product or on the Gln residue prior to assembly into the gramillins requires further proof. The thioredoxin FGSG_00043 could also be required for the disulfide-bond formation between CysA and CysB. The specific involvement of the remaining proteins from the cluster is more difficult to discern, but could have broader regulatory (FGSG_00040 and FGSG_11657) or enzymatic functions (FGSG_00044 and FGSG_00045). The final C-domain of GRA1 does not possess the expected sequence of a termination CT domain, often implicated in macrocyclization and release of a cyclopeptidein fungal NRPs; and the thioesterase FGSG_00047 may act in concert with the terminal C-domain of GRA1 to catalyze the formation of the macrocyclic anhydride and release of the products. In Gibberella zeae (strain ATCC MYA-4620 / CBS 123657 / FGSC 9075 / NRRL 31084 / PH-1) (Wheat head blight fungus), this protein is Gramillins biosynthetic cluster protein FGSG_00038.